The primary structure comprises 290 residues: Elongation factor Ts (290 aa).

Positions 83–86 (TDFV) are involved in Mg(2+) ion dislocation from EF-Tu.

It belongs to the EF-Ts family.

It is found in the cytoplasm. Functionally, associates with the EF-Tu.GDP complex and induces the exchange of GDP to GTP. It remains bound to the aminoacyl-tRNA.EF-Tu.GTP complex up to the GTP hydrolysis stage on the ribosome. This Aquifex aeolicus (strain VF5) protein is Elongation factor Ts (tsf).